The sequence spans 87 residues: Small ribosomal subunit protein bS20 (87 aa).

Positions 1-24 are disordered; the sequence is MANTAQARKRARQSVERNKHNSSL.

This sequence belongs to the bacterial ribosomal protein bS20 family.

In terms of biological role, binds directly to 16S ribosomal RNA. This is Small ribosomal subunit protein bS20 from Bordetella petrii (strain ATCC BAA-461 / DSM 12804 / CCUG 43448).